The chain runs to 584 residues: Segmentation polarity homeobox protein engrailed (584 aa).

5 disordered regions span residues 1 to 27, 141 to 198, 343 to 380, 392 to 451, and 465 to 492; these read MALE…PQQH, EESD…SKPS, IGQA…SSST, CSSA…GGKN, and DRPS…PRTA. The span at 12 to 23 shows a compositional bias: pro residues; sequence APSPPGCLPHSP. The span at 160–174 shows a compositional bias: acidic residues; it reads TEEDEEEDDDIDVDD. Residues 189-198 are compositionally biased toward polar residues; it reads HQQSKQSKPS. 2 stretches are compositionally biased toward low complexity: residues 348-380 and 392-405; these read STTP…SSST and CSSA…SPSS. Residues 478 to 489 are compositionally biased toward basic and acidic residues; it reads QPKDKTNDEKRP. The homeobox DNA-binding region spans 486 to 545; sequence EKRPRTAFSSEQLARLKREFNENRYLTERRRQQLSSELGLNEAQIKIWFQNKRAKIKKST.

It belongs to the engrailed homeobox family.

The protein resides in the nucleus. Functionally, this protein specifies the body segmentation pattern. It is required for the development of the central nervous system. Transcriptional regulator that repress activated promoters. This is Segmentation polarity homeobox protein engrailed (en) from Drosophila virilis (Fruit fly).